The following is a 510-amino-acid chain: Histidine ammonia-lyase (510 aa).

The segment at residues 145-147 is a cross-link (5-imidazolinone (Ala-Gly)); that stretch reads ASG. Ser146 is modified (2,3-didehydroalanine (Ser)).

Belongs to the PAL/histidase family. Contains an active site 4-methylidene-imidazol-5-one (MIO), which is formed autocatalytically by cyclization and dehydration of residues Ala-Ser-Gly.

It localises to the cytoplasm. The catalysed reaction is L-histidine = trans-urocanate + NH4(+). It functions in the pathway amino-acid degradation; L-histidine degradation into L-glutamate; N-formimidoyl-L-glutamate from L-histidine: step 1/3. The sequence is that of Histidine ammonia-lyase from Stigmatella aurantiaca.